Consider the following 180-residue polypeptide: Adenine phosphoribosyltransferase (180 aa).

At Ala2 the chain carries N-acetylalanine. Ser4, Ser15, and Ser30 each carry phosphoserine. Tyr60 is subject to Phosphotyrosine. Residue Ser66 is modified to Phosphoserine. An N6-acetyllysine modification is found at Lys114. A Phosphothreonine modification is found at Thr135.

Belongs to the purine/pyrimidine phosphoribosyltransferase family. In terms of assembly, homodimer.

The protein resides in the cytoplasm. It carries out the reaction AMP + diphosphate = 5-phospho-alpha-D-ribose 1-diphosphate + adenine. The protein operates within purine metabolism; AMP biosynthesis via salvage pathway; AMP from adenine: step 1/1. Functionally, catalyzes a salvage reaction resulting in the formation of AMP, that is energically less costly than de novo synthesis. The protein is Adenine phosphoribosyltransferase of Homo sapiens (Human).